The sequence spans 215 residues: Interleukin-12 subunit alpha (215 aa).

A signal peptide spans 1–22 (MCQSRYLLFLATLALLNHLSLA). 3 cysteine pairs are disulfide-bonded: C33–C106, C60–C192, and C81–C119. N-linked (GlcNAc...) asparagine glycosylation occurs at N89.

The protein belongs to the IL-6 superfamily. In terms of assembly, heterodimer with IL12B; disulfide-linked. This heterodimer is known as interleukin IL-12. Heterodimer with EBI3/IL27B; not disulfide-linked. This heterodimer is known as interleukin IL-35. Interacts with NBR1; this interaction promotes IL-12 secretion.

It localises to the secreted. Functionally, heterodimerizes with IL12B to form the IL-12 cytokine or with EBI3/IL27B to form the IL-35 cytokine. IL-12 is primarily produced by professional antigen-presenting cells (APCs) such as B-cells and dendritic cells (DCs) as well as macrophages and granulocytes and regulates T-cell and natural killer-cell responses, induces the production of interferon-gamma (IFN-gamma), favors the differentiation of T-helper 1 (Th1) cells and is an important link between innate resistance and adaptive immunity. Mechanistically, exerts its biological effects through a receptor composed of IL12R1 and IL12R2 subunits. Binding to the receptor results in the rapid tyrosine phosphorylation of a number of cellular substrates including the JAK family kinases TYK2 and JAK2. In turn, recruited STAT4 gets phosphorylated and translocates to the nucleus where it regulates cytokine/growth factor responsive genes. As part of IL-35, plays essential roles in maintaining the immune homeostasis of the liver microenvironment and also functions as an immune-suppressive cytokine. Mediates biological events through unconventional receptors composed of IL12RB2 and gp130/IL6ST heterodimers or homodimers. Signaling requires the transcription factors STAT1 and STAT4, which form a unique heterodimer that binds to distinct DNA sites. The chain is Interleukin-12 subunit alpha (Il12a) from Mus musculus (Mouse).